We begin with the raw amino-acid sequence, 98 residues long: SPbeta prophage-derived uncharacterized protein YorB (98 aa).

The polypeptide is SPbeta prophage-derived uncharacterized protein YorB (yorB) (Bacillus subtilis (strain 168)).